The following is an 83-amino-acid chain: Short neurotoxin B (83 aa).

The N-terminal stretch at 1-21 (MKTLLLTLVVVTIVCLDLGYT) is a signal peptide. Cystine bridges form between C24/C45, C38/C62, C64/C75, and C76/C81.

It belongs to the three-finger toxin family. Short-chain subfamily. Type I alpha-neurotoxin sub-subfamily. As to expression, expressed by the venom gland.

The protein resides in the secreted. Functionally, binds to muscle nicotinic acetylcholine receptor (nAChR) and inhibit acetylcholine from binding to the receptor, thereby impairing neuromuscular transmission. The chain is Short neurotoxin B from Laticauda laticaudata (Blue-ringed sea krait).